The primary structure comprises 449 residues: Glutamate--tRNA ligase (449 aa).

The short motif at 10 to 20 (PSPTGFLHIGN) is the 'HIGH' region element. Positions 214 to 218 (KLSKR) match the 'KMSKS' region motif. An ATP-binding site is contributed by K217.

Belongs to the class-I aminoacyl-tRNA synthetase family. Glutamate--tRNA ligase type 1 subfamily. Monomer.

It is found in the cytoplasm. It carries out the reaction tRNA(Glu) + L-glutamate + ATP = L-glutamyl-tRNA(Glu) + AMP + diphosphate. Its function is as follows. Catalyzes the attachment of glutamate to tRNA(Glu) in a two-step reaction: glutamate is first activated by ATP to form Glu-AMP and then transferred to the acceptor end of tRNA(Glu). The sequence is that of Glutamate--tRNA ligase from Onion yellows phytoplasma (strain OY-M).